Reading from the N-terminus, the 276-residue chain is Cell division protein FtsQ (276 aa).

Over M1–L11 the chain is Cytoplasmic. The helical transmembrane segment at Y12–I32 threads the bilayer. Residues H33 to D276 lie on the Periplasmic side of the membrane. Residues G45–Y115 enclose the POTRA domain.

Belongs to the FtsQ/DivIB family. FtsQ subfamily. Part of a complex composed of FtsB, FtsL and FtsQ.

Its subcellular location is the cell inner membrane. Essential cell division protein. May link together the upstream cell division proteins, which are predominantly cytoplasmic, with the downstream cell division proteins, which are predominantly periplasmic. May control correct divisome assembly. The protein is Cell division protein FtsQ of Blochmanniella floridana.